The following is a 105-amino-acid chain: MGTNQILDEIREVNLSYLLLAQQMLREDRVAAMYRLGIDEDIADILIKLTNSQLLKMAGSNMLLCRFRFDDSLIAEILTSHKQDRALTQSHAAILMAGQPAEKIS.

It belongs to the FlhD family. As to quaternary structure, homodimer; disulfide-linked. Forms a heterohexamer composed of two FlhC and four FlhD subunits. Each FlhC binds a FlhD dimer, forming a heterotrimer, and a hexamer assembles by dimerization of two heterotrimers.

It localises to the cytoplasm. Functionally, functions in complex with FlhC as a master transcriptional regulator that regulates transcription of several flagellar and non-flagellar operons by binding to their promoter region. Activates expression of class 2 flagellar genes, including fliA, which is a flagellum-specific sigma factor that turns on the class 3 genes. Also regulates genes whose products function in a variety of physiological pathways. The protein is Flagellar transcriptional regulator FlhD of Nitrosomonas eutropha (strain DSM 101675 / C91 / Nm57).